We begin with the raw amino-acid sequence, 160 residues long: Ribonuclease ARB_07070 (160 aa).

Residues 1–18 form the signal peptide; that stretch reads MVSFKAILTLSLIGAAFA. The disordered stretch occupies residues 26-51; the sequence is AEPVEDSGAVANSPEGSGMDLGGTDP. Glu-103 functions as the Proton acceptor in the catalytic mechanism. The Proton donor role is filled by His-144.

It belongs to the ribonuclease U2 family.

The protein resides in the secreted. Its function is as follows. This purine-specific ribonuclease cleaves 28S RNA in eukaryotic ribosomes, inhibits protein synthesis, and shows antitumor activity. In Arthroderma benhamiae (strain ATCC MYA-4681 / CBS 112371) (Trichophyton mentagrophytes), this protein is Ribonuclease ARB_07070.